Consider the following 162-residue polypeptide: tRNA (cytidine(34)-2'-O)-methyltransferase (162 aa).

Leu83, Gly105, Ile127, and Ser135 together coordinate S-adenosyl-L-methionine.

This sequence belongs to the class IV-like SAM-binding methyltransferase superfamily. RNA methyltransferase TrmH family. TrmL subfamily. As to quaternary structure, homodimer.

It is found in the cytoplasm. It catalyses the reaction cytidine(34) in tRNA + S-adenosyl-L-methionine = 2'-O-methylcytidine(34) in tRNA + S-adenosyl-L-homocysteine + H(+). It carries out the reaction 5-carboxymethylaminomethyluridine(34) in tRNA(Leu) + S-adenosyl-L-methionine = 5-carboxymethylaminomethyl-2'-O-methyluridine(34) in tRNA(Leu) + S-adenosyl-L-homocysteine + H(+). Its function is as follows. Methylates the ribose at the nucleotide 34 wobble position in the two leucyl isoacceptors tRNA(Leu)(CmAA) and tRNA(Leu)(cmnm5UmAA). Catalyzes the methyl transfer from S-adenosyl-L-methionine to the 2'-OH of the wobble nucleotide. The polypeptide is tRNA (cytidine(34)-2'-O)-methyltransferase (Photorhabdus asymbiotica subsp. asymbiotica (strain ATCC 43949 / 3105-77) (Xenorhabdus luminescens (strain 2))).